Consider the following 748-residue polypeptide: E3 ubiquitin-protein ligase SMURF2 (748 aa).

The C2 domain occupies 1-119; the sequence is MSNPGGRRNG…TGYQRLDLCK (119 aa). Lys-119 participates in a covalent cross-link: Glycyl lysine isopeptide (Lys-Gly) (interchain with G-Cter in ubiquitin). 3 consecutive WW domains span residues 157–190, 251–284, and 297–330; these read NDLPDGWEERRTASGRIQYLNHITRTTQWERPTR, PDLPEGYEQRTTQQGQVYFLHTQTGVSTWHDPRV, and GPLPPGWEIRNTATGRVYFVDHNNRTTQFTDPRL. The HECT domain occupies 414–748; sequence RPKDLWKRLM…IEETCGFAVE (335 aa). Cys-716 functions as the Glycyl thioester intermediate in the catalytic mechanism.

Interacts (via WW domains) with SMAD1. Interacts (via WW domains) with SMAD2 (via PY-motif). Interacts (via WW domains) with SMAD3 (via PY-motif). Interacts with SMAD6. Interacts with SMAD7 (via PY-motif) and TGFBR1; SMAD7 recruits SMURF2 to the TGF-beta receptor and regulates its degradation. Does not interact with SMAD4; SMAD4 lacks a PY-motif. Interacts with AIMP1. Interacts with NDFIP1 and NDFIP2; this interaction activates the E3 ubiquitin-protein ligase. Interacts with TTC3. Auto-ubiquitinated and ubiquitinated in the presence of RNF11 and UBE2D1. Ubiquitinated by the SCF(FBXL15) complex and TTC3, leading to its degradation by the proteasome. 'Lys-48'-linked polyubiquitination mediated by TRAF4 at Lys-119 leads to SMURF2 proteasomal degradation.

It localises to the nucleus. It is found in the cytoplasm. The protein resides in the cell membrane. Its subcellular location is the membrane raft. It catalyses the reaction S-ubiquitinyl-[E2 ubiquitin-conjugating enzyme]-L-cysteine + [acceptor protein]-L-lysine = [E2 ubiquitin-conjugating enzyme]-L-cysteine + N(6)-ubiquitinyl-[acceptor protein]-L-lysine.. It participates in protein modification; protein ubiquitination. Activated by NDFIP1- and NDFIP2-binding. E3 ubiquitin-protein ligase which accepts ubiquitin from an E2 ubiquitin-conjugating enzyme in the form of a thioester and then directly transfers the ubiquitin to targeted substrates. Interacts with SMAD7 to trigger SMAD7-mediated transforming growth factor beta/TGF-beta receptor ubiquitin-dependent degradation, thereby down-regulating TGF-beta signaling. In addition, interaction with SMAD7 activates autocatalytic degradation, which is prevented by interaction with AIMP1. Also forms a stable complex with TGF-beta receptor-mediated phosphorylated SMAD1, SMAD2 and SMAD3, and targets SMAD1 and SMAD2 for ubiquitination and proteasome-mediated degradation. SMAD2 may recruit substrates, such as SNON, for ubiquitin-dependent degradation. Negatively regulates TGFB1-induced epithelial-mesenchymal transition and myofibroblast differentiation. This is E3 ubiquitin-protein ligase SMURF2 from Mus musculus (Mouse).